We begin with the raw amino-acid sequence, 1935 residues long: Myosin heavy chain, fast skeletal muscle (1935 aa).

Positions 32–81 (DAKTAFFVVDPDEMYLKGTLVSKEGGKATVKTHSGKTVTVKEDEIFPMNP) constitute a Myosin N-terminal SH3-like domain. One can recognise a Myosin motor domain in the interval 85–779 (DKIEDMAMMT…LLGALEEMRD (695 aa)). Lys129 bears the N6,N6,N6-trimethyllysine mark. 178–185 (GESGAGKT) provides a ligand contact to ATP. Actin-binding regions lie at residues 659–681 (LMTN…ESKT) and 761–775 (HTKV…GALE). The IQ domain occupies 782-811 (LALLVTMTQALCRGYVMRKEFVKMMERRES). Positions 812 to 839 (IYSIQYNIRSFMNVKHWPWMKLYFKIKP) are hinge. Residues 840 to 1935 (LLKSAETEKE…RDAGKSKDEE (1096 aa)) are a coiled coil. 2 disordered regions span residues 1589 to 1608 (RNSQ…EVRS) and 1902 to 1935 (HELE…KDEE). Over residues 1592 to 1603 (QRVIDSMQSTLD) the composition is skewed to polar residues. Basic and acidic residues-rich tracts occupy residues 1902–1913 (HELEEAQERADV) and 1924–1935 (KSRDAGKSKDEE).

Belongs to the TRAFAC class myosin-kinesin ATPase superfamily. Myosin family. Muscle myosin is a hexameric protein that consists of 2 heavy chain subunits (MHC), 2 alkali light chain subunits (MLC) and 2 regulatory light chain subunits (MLC-2).

The protein resides in the cytoplasm. The protein localises to the myofibril. Muscle contraction. The sequence is that of Myosin heavy chain, fast skeletal muscle from Cyprinus carpio (Common carp).